A 315-amino-acid polypeptide reads, in one-letter code: Putative HTH-type transcriptional regulatory protein PF1851 (315 aa).

One can recognise an HTH cro/C1-type domain in the interval 131-189 (LRELREKYGYSTTELAEMLGVSRKSVQRYEKGEGMVSIDVAIRLEEIFDEPLVKPIDIF). Residues 142 to 161 (TTELAEMLGVSRKSVQRYEK) constitute a DNA-binding region (H-T-H motif).

In Pyrococcus furiosus (strain ATCC 43587 / DSM 3638 / JCM 8422 / Vc1), this protein is Putative HTH-type transcriptional regulatory protein PF1851.